The sequence spans 4776 residues: Pneumococcal serine-rich repeat protein (4776 aa).

Residues 1-72 (MTETVEDKVS…VVLGTISTSN (72 aa)) form the signal peptide. O-linked (GlcNAc...) serine glycans are attached at residues Ser-73, Ser-75, Ser-76, Ser-78, Ser-80, Ser-82, Ser-94, Ser-100, Ser-108, Ser-110, Ser-118, Ser-120, and Ser-121. The segment at 73–121 (SASSTSLSASESASTSASESASTSASTSASTSASESASTSASTSISASS) is serine-rich repeat region 1, SRR1. The segment at 86-112 (STSASESASTSASTSASTSASESASTS) is disordered. The interval 122–166 (TVVGSQTAAATEATAKKVEEDRKKPASDYVASVTNVNLQSYAKRR) is self aggregating domain. The segment at 122 to 394 (TVVGSQTAAA…QSKSLSVSAS (273 aa)) is basic region, BR. Residues 164–168 (KRRKR) carry the Host furin cleavage recognition motif. Residues 273–341 (TQTMLTLGSD…GYGLTSSWTV (69 aa)) are keratin 10-binding domain, cell-type specific binding to lung-derived cells. The segment at 395–4712 (QSASASASTS…ASTSASASAS (4318 aa)) is serine-rich repeat region 2, SRR2. 27 disordered regions span residues 481 to 627 (ASTS…STSA), 861 to 889 (ASAS…SAST), 925 to 965 (ASAS…SASA), 1052 to 1085 (SAST…SASA), 1123 to 1153 (ASAS…STSA), 1171 to 1199 (ASAS…STSA), 1311 to 1357 (ASES…SAST), 1671 to 1731 (ASES…SESA), 1792 to 1863 (SASE…STSA), 2105 to 2133 (ASAS…SAST), 2169 to 2209 (ASAS…SASA), 2296 to 2329 (SAST…SASA), 2367 to 2397 (ASAS…STSA), 2415 to 2443 (ASAS…STSA), 2571 to 2631 (ASES…SESA), 2737 to 2805 (ESAS…STSA), 2855 to 3113 (ASAS…STSA), 3347 to 3375 (ASAS…SAST), 3411 to 3451 (ASAS…SASA), 3538 to 3571 (SAST…SASA), 3609 to 3639 (ASAS…STSA), 3657 to 3685 (ASAS…STSA), 3797 to 3843 (ASES…SAST), 4167 to 4197 (ASAS…STSA), 4215 to 4243 (ASAS…STSA), 4355 to 4401 (ASES…SAST), and 4706 to 4747 (SASA…GTES). Positions 4715–4747 (VSNSANHSNSQVGNTSGSTGKSQKELPNTGTES) are enriched in polar residues. The LPXTG sorting signal motif lies at 4740–4744 (LPNTG). Thr-4743 carries the pentaglycyl murein peptidoglycan amidated threonine modification. Residues 4744 to 4776 (GTESSIGSVLLGVLAAVTGIGLVAKRRKRDEEE) constitute a propeptide, removed by sortase.

It belongs to the serine-rich repeat protein (SRRP) family. Binds to human and mouse protein keratin 10 (KRT10). Glycosylated. Only truncated substrates greater than 25 residues long are glycosylated by the Gtf1-Gtf2 complex in vitro; only Ser residues have been seen to be glycosylated. Based on electrophoretic mobility it is probable that most of the Ser residues in SSR1 and SSR2 are O-GlcNAcylated. Subsequent glycosylation by up to 7 sugar transferases (Gtf3 and GlyAT, GlyB, GlyD, GlyE, GlyF and GlyG) is able to generate very high sugar polymorphism. Post-translationally, can be cleaved by human furin protease; this fragment contributes to self-aggregation and possibly biofilm formation in vitro.

Its subcellular location is the secreted. The protein resides in the cell wall. The protein localises to the cell surface. Protein that allows bacteria to adhere to mammalian host cells. Required for full virulence in mouse infection models when infected intranasally. Required for adhesion to host cells in vitro and for persistence in the lower respiratory tract. Binds host keratin 10 (KRT10) on lung cells which mediates adhesion via the C-terminus of the basic region (BR, residues 273-341); glycosylation of either protein is not required for the interaction. A region in the N-terminus (residues 122-166) self aggregates, contributing to mature biofilm formation. The basic region (BR, residues 187-385) also self aggregates; the BR binds DNA which enhances self aggregation. In Streptococcus pneumoniae serotype 4 (strain ATCC BAA-334 / TIGR4), this protein is Pneumococcal serine-rich repeat protein.